The sequence spans 76 residues: Kappa-scoloptoxin(15)-Ssd3a (76 aa).

Residues 1 to 23 (MEGKIIFICFLVVLLTLPELISS) form the signal peptide.

In terms of processing, contains 2 disulfide bonds. Expressed by the venom gland.

The protein resides in the secreted. Its function is as follows. Acts as a voltage-gated potassium channel inhibitor. The polypeptide is Kappa-scoloptoxin(15)-Ssd3a (Scolopendra dehaani (Thai centipede)).